The following is a 329-amino-acid chain: NADH-quinone oxidoreductase subunit H (329 aa).

9 consecutive transmembrane segments (helical) span residues 9-29 (LIKILILVAVFSALGGFATYI), 42-62 (GPCYVGPFGLLQVAADGIKLF), 75-95 (FIFTLAPIIAMVSAFVSMAPI), 117-137 (IGFLFFLAVGSAGIYAPILAG), 154-174 (IQLLSFEVVSTLTILAPLMVV), 188-208 (GGFLDWLVFKQPLAFVLFLIA), 238-258 (LKWGMFFLAEYAHLFAFSFVI), 269-291 (WGFIPGGIAILIKAGFFVFLSMW), and 309-329 (WKIMLPLALLNIVLTGIVILI).

The protein belongs to the complex I subunit 1 family. As to quaternary structure, NDH-1 is composed of 14 different subunits. Subunits NuoA, H, J, K, L, M, N constitute the membrane sector of the complex.

Its subcellular location is the cell inner membrane. It carries out the reaction a quinone + NADH + 5 H(+)(in) = a quinol + NAD(+) + 4 H(+)(out). NDH-1 shuttles electrons from NADH, via FMN and iron-sulfur (Fe-S) centers, to quinones in the respiratory chain. The immediate electron acceptor for the enzyme in this species is believed to be ubiquinone. Couples the redox reaction to proton translocation (for every two electrons transferred, four hydrogen ions are translocated across the cytoplasmic membrane), and thus conserves the redox energy in a proton gradient. This subunit may bind ubiquinone. This Helicobacter pylori (strain J99 / ATCC 700824) (Campylobacter pylori J99) protein is NADH-quinone oxidoreductase subunit H.